Consider the following 1889-residue polypeptide: Treslin (1889 aa).

Ser-295, Ser-599, Ser-820, Ser-861, Ser-919, Ser-934, Ser-1002, Ser-1027, and Ser-1078 each carry phosphoserine. The span at 812–832 shows a compositional bias: low complexity; the sequence is DSMSQESMSPPPSSSTHRSVS. Residues 812–836 are disordered; that stretch reads DSMSQESMSPPPSSSTHRSVSAITE. Residues 979 to 1063 are disordered; sequence RLLHRQIKGR…RENFPVQSIQ (85 aa). Positions 1020 to 1050 are enriched in polar residues; the sequence is LSFSRTNSGSFYSVSQPKSRSVQRIHSSQQE. 6 disordered regions span residues 1098 to 1421, 1471 to 1508, 1520 to 1543, 1630 to 1714, 1730 to 1751, and 1841 to 1875; these read EIST…SQFS, LPGEEGEEPESTIADELPSVSDPGILVPAPSSVSSSSE, GKQRQDAAQQGSPRASEATSSPQT, SCTP…SLEQ, VCQLPDQSPPKDSASVTEETSW, and QGRTPSSHSTDTRDEEVDVFPSTAEESPFSHTLSR. The span at 1127-1179 shows a compositional bias: polar residues; the sequence is TAQTLLYTPERLQNSPTEMTSAEGTISEATIKTPSSHGYNSPFASKVTSQKTV. Thr-1134 carries the phosphothreonine modification. Phosphoserine is present on Ser-1141. A compositionally biased stretch (low complexity) spans 1187–1197; it reads SPPLTKLPSTP. A compositionally biased stretch (polar residues) spans 1203–1219; the sequence is QPPQCSSDCTWPHSVNS. The segment covering 1339-1351 has biased composition (low complexity); sequence TSPSVTSSVSCPV. The segment covering 1373 to 1382 has biased composition (basic residues); that stretch reads KLRRSCRKKS. Ser-1406 bears the Phosphoserine mark. The span at 1496–1508 shows a compositional bias: low complexity; sequence LVPAPSSVSSSSE. 2 stretches are compositionally biased toward polar residues: residues 1525–1543 and 1652–1662; these read DAAQQGSPRASEATSSPQT and WTPSPKQSGKT. Positions 1705–1714 are enriched in basic and acidic residues; sequence PEGKERSLEQ.

This sequence belongs to the treslin family. As to quaternary structure, interacts with TOPBP1 (via BRCT domains); interaction takes place in a CDK2-dependent manner. Component of the replisome complex composed of at least DONSON, MCM2, MCM7, PCNA and TICRR.

The protein resides in the nucleus. Functionally, regulator of DNA replication and S/M and G2/M checkpoints. Regulates the triggering of DNA replication initiation via its interaction with TOPBP1 by participating in CDK2-mediated loading of CDC45L onto replication origins. Required for the transition from pre-replication complex (pre-RC) to pre-initiation complex (pre-IC). Required to prevent mitotic entry after treatment with ionizing radiation. This is Treslin (Ticrr) from Mus musculus (Mouse).